We begin with the raw amino-acid sequence, 115 residues long: Replication initiation control protein YabA (115 aa).

Zn(2+)-binding residues include histidine 86, cysteine 88, cysteine 102, and cysteine 105.

This sequence belongs to the YabA family. In terms of assembly, homotetramer. Interacts with both DnaA and DnaN, acting as a bridge between these two proteins. Zn(2+) serves as cofactor.

Its subcellular location is the cytoplasm. The protein localises to the nucleoid. Its function is as follows. Involved in control of chromosome replication initiation. Inhibits the cooperative binding of DnaA to the oriC region, thus negatively regulating initiation of chromosome replication. Inhibits the ability of DnaA-ATP to form a helix on DNA; does not disassemble preformed DnaA-DNA helices. Decreases the residence time of DnaA on the chromosome at its binding sites (oriC, replication forks and promoter-binding sites). Tethers DnaA to the replication machinery via the DNA polymerase beta sliding clamp subunit (dnaN). Associates with oriC and other DnaA targets on the chromosome in a DnaA-dependent manner. The chain is Replication initiation control protein YabA from Enterococcus faecalis (strain ATCC 700802 / V583).